Reading from the N-terminus, the 335-residue chain is L-lactate dehydrogenase B chain (335 aa).

NAD(+)-binding positions include 29 to 57 (GQVG…VEDK) and arginine 99. Substrate contacts are provided by arginine 106, asparagine 138, and arginine 169. Asparagine 138 lines the NAD(+) pocket. Histidine 193 (proton acceptor) is an active-site residue. Substrate is bound at residue threonine 248.

The protein belongs to the LDH/MDH superfamily. LDH family. As to quaternary structure, homotetramer.

The protein resides in the cytoplasm. It catalyses the reaction (S)-lactate + NAD(+) = pyruvate + NADH + H(+). It participates in fermentation; pyruvate fermentation to lactate; (S)-lactate from pyruvate: step 1/1. Interconverts simultaneously and stereospecifically pyruvate and lactate with concomitant interconversion of NADH and NAD(+). The protein is L-lactate dehydrogenase B chain (LDHB) of Sceloporus undulatus (Eastern fence lizard).